The primary structure comprises 303 residues: Lipoyl synthase (303 aa).

Cysteine 40, cysteine 45, cysteine 51, cysteine 67, cysteine 71, cysteine 74, and serine 280 together coordinate [4Fe-4S] cluster. Positions 53 to 269 constitute a Radical SAM core domain; the sequence is AVRKTATFMI…KEIALSKGFS (217 aa).

The protein belongs to the radical SAM superfamily. Lipoyl synthase family. Requires [4Fe-4S] cluster as cofactor.

It localises to the cytoplasm. It catalyses the reaction [[Fe-S] cluster scaffold protein carrying a second [4Fe-4S](2+) cluster] + N(6)-octanoyl-L-lysyl-[protein] + 2 oxidized [2Fe-2S]-[ferredoxin] + 2 S-adenosyl-L-methionine + 4 H(+) = [[Fe-S] cluster scaffold protein] + N(6)-[(R)-dihydrolipoyl]-L-lysyl-[protein] + 4 Fe(3+) + 2 hydrogen sulfide + 2 5'-deoxyadenosine + 2 L-methionine + 2 reduced [2Fe-2S]-[ferredoxin]. The protein operates within protein modification; protein lipoylation via endogenous pathway; protein N(6)-(lipoyl)lysine from octanoyl-[acyl-carrier-protein]. Its function is as follows. Catalyzes the radical-mediated insertion of two sulfur atoms into the C-6 and C-8 positions of the octanoyl moiety bound to the lipoyl domains of lipoate-dependent enzymes, thereby converting the octanoylated domains into lipoylated derivatives. The protein is Lipoyl synthase of Halalkalibacterium halodurans (strain ATCC BAA-125 / DSM 18197 / FERM 7344 / JCM 9153 / C-125) (Bacillus halodurans).